The chain runs to 138 residues: MRDMIWTYRALNNPAARRKWTAFILLIVLAGFGYTAYKIAGGAEVGKSLIAAAIFALFISLYAIITLGKPRHYYIEGDYVYYRPFKTNLKDIEGFEVDEERRVIRLKGAGIFSVRTLYFDNEDDLRQAVRRLERIVKR.

The next 2 helical transmembrane spans lie at 21–43 (TAFI…AGGA) and 48–65 (SLIA…YAII).

It localises to the cell membrane. This is an uncharacterized protein from Archaeoglobus fulgidus (strain ATCC 49558 / DSM 4304 / JCM 9628 / NBRC 100126 / VC-16).